A 185-amino-acid polypeptide reads, in one-letter code: Ribosome-recycling factor (185 aa).

This sequence belongs to the RRF family.

The protein resides in the cytoplasm. Responsible for the release of ribosomes from messenger RNA at the termination of protein biosynthesis. May increase the efficiency of translation by recycling ribosomes from one round of translation to another. The chain is Ribosome-recycling factor from Photobacterium profundum (strain SS9).